The sequence spans 135 residues: Small ribosomal subunit protein uS12 (135 aa).

Asp89 carries the post-translational modification 3-methylthioaspartic acid. The interval Asp103 to Arg135 is disordered. The span at Met111–Lys123 shows a compositional bias: basic residues. Residues Pro124–Arg135 show a composition bias toward low complexity.

This sequence belongs to the universal ribosomal protein uS12 family. As to quaternary structure, part of the 30S ribosomal subunit. Contacts proteins S8 and S17. May interact with IF1 in the 30S initiation complex.

In terms of biological role, with S4 and S5 plays an important role in translational accuracy. Its function is as follows. Interacts with and stabilizes bases of the 16S rRNA that are involved in tRNA selection in the A site and with the mRNA backbone. Located at the interface of the 30S and 50S subunits, it traverses the body of the 30S subunit contacting proteins on the other side and probably holding the rRNA structure together. The combined cluster of proteins S8, S12 and S17 appears to hold together the shoulder and platform of the 30S subunit. The chain is Small ribosomal subunit protein uS12 from Gloeobacter violaceus (strain ATCC 29082 / PCC 7421).